A 174-amino-acid chain; its full sequence is Large ribosomal subunit protein uL18 (174 aa).

The protein belongs to the universal ribosomal protein uL18 family. Part of the 50S ribosomal subunit. Contacts the 5S and 23S rRNAs.

Its function is as follows. This is one of the proteins that bind and probably mediate the attachment of the 5S RNA into the large ribosomal subunit, where it forms part of the central protuberance. The chain is Large ribosomal subunit protein uL18 from Methanosarcina mazei (strain ATCC BAA-159 / DSM 3647 / Goe1 / Go1 / JCM 11833 / OCM 88) (Methanosarcina frisia).